We begin with the raw amino-acid sequence, 175 residues long: Co-chaperone protein HscB homolog (175 aa).

Positions 2–74 (NYFQLFNIEV…LQRAEYILVQ (73 aa)) constitute a J domain.

This sequence belongs to the HscB family. Interacts with HscA and stimulates its ATPase activity.

Co-chaperone involved in the maturation of iron-sulfur cluster-containing proteins. Seems to help targeting proteins to be folded toward HscA. This is Co-chaperone protein HscB homolog from Colwellia psychrerythraea (strain 34H / ATCC BAA-681) (Vibrio psychroerythus).